A 479-amino-acid polypeptide reads, in one-letter code: Membrane-bound lytic murein transglycosylase F (479 aa).

A signal peptide spans 1–18; the sequence is MKGLFIRIVLAICLSLWA. The tract at residues 19-266 is non-LT domain; it reads IDMVFPWQQI…RIEEKYFNHL (248 aa). An LT domain region spans residues 267–479; the sequence is NQFDYVDTRS…ISTQTQQEQR (213 aa). Residue Glu311 is part of the active site.

It in the N-terminal section; belongs to the bacterial solute-binding protein 3 family. The protein in the C-terminal section; belongs to the transglycosylase Slt family.

It is found in the cell outer membrane. The enzyme catalyses Exolytic cleavage of the (1-&gt;4)-beta-glycosidic linkage between N-acetylmuramic acid (MurNAc) and N-acetylglucosamine (GlcNAc) residues in peptidoglycan, from either the reducing or the non-reducing ends of the peptidoglycan chains, with concomitant formation of a 1,6-anhydrobond in the MurNAc residue.. Functionally, murein-degrading enzyme that degrades murein glycan strands and insoluble, high-molecular weight murein sacculi, with the concomitant formation of a 1,6-anhydromuramoyl product. Lytic transglycosylases (LTs) play an integral role in the metabolism of the peptidoglycan (PG) sacculus. Their lytic action creates space within the PG sacculus to allow for its expansion as well as for the insertion of various structures such as secretion systems and flagella. In Histophilus somni (strain 2336) (Haemophilus somnus), this protein is Membrane-bound lytic murein transglycosylase F.